Reading from the N-terminus, the 275-residue chain is Formamidopyrimidine-DNA glycosylase (275 aa).

The active-site Schiff-base intermediate with DNA is the proline 2. Glutamate 3 serves as the catalytic Proton donor. The Proton donor; for beta-elimination activity role is filled by lysine 58. DNA contacts are provided by histidine 93, arginine 111, and arginine 156. The segment at 241–275 adopts an FPG-type zinc-finger fold; it reads FVYDRAGQPCRVCGTPIRQIVQGQRSTYYCPTCQR. The active-site Proton donor; for delta-elimination activity is arginine 265.

The protein belongs to the FPG family. In terms of assembly, monomer. Zn(2+) serves as cofactor.

It catalyses the reaction Hydrolysis of DNA containing ring-opened 7-methylguanine residues, releasing 2,6-diamino-4-hydroxy-5-(N-methyl)formamidopyrimidine.. The enzyme catalyses 2'-deoxyribonucleotide-(2'-deoxyribose 5'-phosphate)-2'-deoxyribonucleotide-DNA = a 3'-end 2'-deoxyribonucleotide-(2,3-dehydro-2,3-deoxyribose 5'-phosphate)-DNA + a 5'-end 5'-phospho-2'-deoxyribonucleoside-DNA + H(+). Involved in base excision repair of DNA damaged by oxidation or by mutagenic agents. Acts as a DNA glycosylase that recognizes and removes damaged bases. Has a preference for oxidized purines, such as 7,8-dihydro-8-oxoguanine (8-oxoG). Has AP (apurinic/apyrimidinic) lyase activity and introduces nicks in the DNA strand. Cleaves the DNA backbone by beta-delta elimination to generate a single-strand break at the site of the removed base with both 3'- and 5'-phosphates. The protein is Formamidopyrimidine-DNA glycosylase of Burkholderia cenocepacia (strain ATCC BAA-245 / DSM 16553 / LMG 16656 / NCTC 13227 / J2315 / CF5610) (Burkholderia cepacia (strain J2315)).